We begin with the raw amino-acid sequence, 126 residues long: S-adenosylmethionine decarboxylase proenzyme (126 aa).

The active-site Schiff-base intermediate with substrate; via pyruvic acid is the S63. At S63 the chain carries Pyruvic acid (Ser); by autocatalysis. H68 (proton acceptor; for processing activity) is an active-site residue. The active-site Proton donor; for catalytic activity is the C83.

It belongs to the prokaryotic AdoMetDC family. Type 1 subfamily. In terms of assembly, heterotetramer of two alpha and two beta chains arranged as a dimer of alpha/beta heterodimers. Requires pyruvate as cofactor. In terms of processing, is synthesized initially as an inactive proenzyme. Formation of the active enzyme involves a self-maturation process in which the active site pyruvoyl group is generated from an internal serine residue via an autocatalytic post-translational modification. Two non-identical subunits are generated from the proenzyme in this reaction, and the pyruvate is formed at the N-terminus of the alpha chain, which is derived from the carboxyl end of the proenzyme. The post-translation cleavage follows an unusual pathway, termed non-hydrolytic serinolysis, in which the side chain hydroxyl group of the serine supplies its oxygen atom to form the C-terminus of the beta chain, while the remainder of the serine residue undergoes an oxidative deamination to produce ammonia and the pyruvoyl group blocking the N-terminus of the alpha chain.

It catalyses the reaction S-adenosyl-L-methionine + H(+) = S-adenosyl 3-(methylsulfanyl)propylamine + CO2. The protein operates within amine and polyamine biosynthesis; S-adenosylmethioninamine biosynthesis; S-adenosylmethioninamine from S-adenosyl-L-methionine: step 1/1. Catalyzes the decarboxylation of S-adenosylmethionine to S-adenosylmethioninamine (dcAdoMet), the propylamine donor required for the synthesis of the polyamines spermine and spermidine from the diamine putrescine. In Clostridium tetani (strain Massachusetts / E88), this protein is S-adenosylmethionine decarboxylase proenzyme.